A 338-amino-acid chain; its full sequence is 1-aminocyclopropane-1-carboxylate deaminase (338 aa).

The residue at position 51 (Lys-51) is an N6-(pyridoxal phosphate)lysine. Ser-78 functions as the Nucleophile in the catalytic mechanism.

It belongs to the ACC deaminase/D-cysteine desulfhydrase family. As to quaternary structure, homotrimer. It depends on pyridoxal 5'-phosphate as a cofactor.

It carries out the reaction 1-aminocyclopropane-1-carboxylate + H2O = 2-oxobutanoate + NH4(+). In terms of biological role, catalyzes a cyclopropane ring-opening reaction, the irreversible conversion of 1-aminocyclopropane-1-carboxylate (ACC) to ammonia and alpha-ketobutyrate. Allows growth on ACC as a nitrogen source. The sequence is that of 1-aminocyclopropane-1-carboxylate deaminase from Paracidovorax citrulli (strain AAC00-1) (Acidovorax citrulli).